The sequence spans 472 residues: ATP synthase subunit beta (472 aa).

Residue G150–T157 coordinates ATP.

Belongs to the ATPase alpha/beta chains family. F-type ATPases have 2 components, CF(1) - the catalytic core - and CF(0) - the membrane proton channel. CF(1) has five subunits: alpha(3), beta(3), gamma(1), delta(1), epsilon(1). CF(0) has four main subunits: a, b, b' and c.

It is found in the cellular chromatophore membrane. The catalysed reaction is ATP + H2O + 4 H(+)(in) = ADP + phosphate + 5 H(+)(out). In terms of biological role, produces ATP from ADP in the presence of a proton gradient across the membrane. The catalytic sites are hosted primarily by the beta subunits. This Rhodobacter capsulatus (Rhodopseudomonas capsulata) protein is ATP synthase subunit beta.